The primary structure comprises 451 residues: 1,3-beta-glucanosyltransferase PGA4 (451 aa).

The first 18 residues, methionine 1–serine 18, serve as a signal peptide directing secretion. Tyrosine 81 is a (1,3-beta-D-glucosyl)n binding site. N-linked (GlcNAc...) asparagine glycosylation occurs at asparagine 88. (1,3-beta-D-glucosyl)n-binding positions include asparagine 108–arginine 116, asparagine 151, glutamate 152, and arginine 198. Residue glutamate 152 is the Proton donor of the active site. N-linked (GlcNAc...) asparagine glycosylation is present at asparagine 245. Glutamate 254 serves as the catalytic Nucleophile. Tyrosine 286 is a binding site for (1,3-beta-D-glucosyl)n. Residues serine 316–glycine 336 are disordered. Asparagine 347, asparagine 394, and asparagine 422 each carry an N-linked (GlcNAc...) asparagine glycan. The tract at residues tyrosine 395 to lysine 427 is disordered. A compositionally biased stretch (low complexity) spans threonine 396–serine 426. Aspartate 430 carries GPI-anchor amidated aspartate lipidation. Positions alanine 431–leucine 451 are cleaved as a propeptide — removed in mature form.

It belongs to the glycosyl hydrolase 72 family. Post-translationally, the GPI-anchor is attached to the protein in the endoplasmic reticulum and serves to target the protein to the cell surface. There, the glucosamine-inositol phospholipid moiety is cleaved off and the GPI-modified mannoprotein is covalently attached via its lipidless GPI glycan remnant to the 1,6-beta-glucan of the outer cell wall layer.

The protein localises to the secreted. The protein resides in the cell wall. Its subcellular location is the membrane. Functionally, splits internally a 1,3-beta-glucan molecule and transfers the newly generated reducing end (the donor) to the non-reducing end of another 1,3-beta-glucan molecule (the acceptor) forming a 1,3-beta linkage, resulting in the elongation of 1,3-beta-glucan chains in the cell wall. Involved in cell wall biosynthesis and morphogenesis. Plays a key role in virulence. In Candida albicans (strain SC5314 / ATCC MYA-2876) (Yeast), this protein is 1,3-beta-glucanosyltransferase PGA4 (PGA4).